Reading from the N-terminus, the 296-residue chain is uncharacterized protein (296 aa).

A helical transmembrane segment spans residues 1 to 21; it reads MIFAVVDILEISIQLLCILLF.

It is found in the membrane. This is an uncharacterized protein from Caenorhabditis elegans.